A 231-amino-acid polypeptide reads, in one-letter code: LexA repressor (231 aa).

The H-T-H motif DNA-binding region spans 28–48; the sequence is IREIGEALDIRSTNGVNDHLK. Active-site for autocatalytic cleavage activity residues include Ser-149 and Lys-186.

It belongs to the peptidase S24 family. Homodimer.

It carries out the reaction Hydrolysis of Ala-|-Gly bond in repressor LexA.. Functionally, represses a number of genes involved in the response to DNA damage (SOS response), including recA and lexA. In the presence of single-stranded DNA, RecA interacts with LexA causing an autocatalytic cleavage which disrupts the DNA-binding part of LexA, leading to derepression of the SOS regulon and eventually DNA repair. The sequence is that of LexA repressor from Anaeromyxobacter sp. (strain Fw109-5).